The chain runs to 362 residues: DNA replication and repair protein RecF (362 aa).

ATP is bound at residue Gly-30–Ser-37.

This sequence belongs to the RecF family.

Its subcellular location is the cytoplasm. Functionally, the RecF protein is involved in DNA metabolism; it is required for DNA replication and normal SOS inducibility. RecF binds preferentially to single-stranded, linear DNA. It also seems to bind ATP. This Thermoanaerobacter pseudethanolicus (strain ATCC 33223 / 39E) (Clostridium thermohydrosulfuricum) protein is DNA replication and repair protein RecF.